Consider the following 260-residue polypeptide: DNA repair protein RecO (260 aa).

Belongs to the RecO family.

Involved in DNA repair and RecF pathway recombination. The sequence is that of DNA repair protein RecO from Streptococcus gordonii (strain Challis / ATCC 35105 / BCRC 15272 / CH1 / DL1 / V288).